The sequence spans 122 residues: uncharacterized protein (122 aa).

It localises to the mitochondrion. This is an uncharacterized protein from Arabidopsis thaliana (Mouse-ear cress).